A 638-amino-acid chain; its full sequence is MAKTRLTVDTNDLASRITRAPFPGSAKIYIEGSRPDIRVPFREVTLTDTMVHEGAGEPRREANPPLRLYDASGVYTDPASPIDITRGLPPLRGAWINERADTEALPGISSAYGRERLNDPALAALRMAHAPVPRRAKAGANVSQMHYARKGIITPEMEYIAVRENLVRAQLAERLATERMPKKGHSFNASIPEQITAEFVRDEVARGRAVIPNNINHPESEPMIIGRNFLIKVNANIGNSAVTSSIEEEVDKLVWSIRWGADTVMDLSTGENIHETREWILRNSPVPIGTVPIYQALEKVNGKAEDLTWEIFRDTLIEQAEQGVDYFTIHAGVRLAYVPLTANRLTGIVSRGGSIMAKWCLSHHKESFLYERFDEICEIMKAYDVCFSLGDGLRPGSIADANDEAQFAELHTLGELTQIAWKHDVQVMIEGPGHVPLQLVKENVDKQLEACFEAPFYTLGPLITDISPGYDHISSAMGAANIGWYGTAMLCYVTPKEHLGLPNRDDVKQGLIAYKIAAHAGDLAKGYPGAQMWDNAVSKARFEFRWEDQFRLAIDPDTAMAYHDETLPKENAKVAHFCSMCGPKFCSMKISQEVREFARLNPASTTLAAPGVIAIKQIDSGFEEKAKEFREGGSEIYS.

Substrate contacts are provided by residues asparagine 236, methionine 265, tyrosine 294, histidine 330, 350-352 (SRG), 391-394 (DGLR), and glutamate 430. A Zn(2+)-binding site is contributed by histidine 434. Tyrosine 457 is a substrate binding site. Histidine 498 lines the Zn(2+) pocket. Cysteine 578, cysteine 581, and cysteine 586 together coordinate [4Fe-4S] cluster.

Belongs to the ThiC family. As to quaternary structure, homodimer. The cofactor is [4Fe-4S] cluster.

It catalyses the reaction 5-amino-1-(5-phospho-beta-D-ribosyl)imidazole + S-adenosyl-L-methionine = 4-amino-2-methyl-5-(phosphooxymethyl)pyrimidine + CO + 5'-deoxyadenosine + formate + L-methionine + 3 H(+). Its pathway is cofactor biosynthesis; thiamine diphosphate biosynthesis. Catalyzes the synthesis of the hydroxymethylpyrimidine phosphate (HMP-P) moiety of thiamine from aminoimidazole ribotide (AIR) in a radical S-adenosyl-L-methionine (SAM)-dependent reaction. The sequence is that of Phosphomethylpyrimidine synthase from Polaromonas sp. (strain JS666 / ATCC BAA-500).